Here is a 131-residue protein sequence, read N- to C-terminus: Global transcriptional regulator Spx 1 (131 aa).

Cysteine 10 and cysteine 13 are joined by a disulfide.

This sequence belongs to the ArsC family. Spx subfamily. In terms of assembly, interacts with the C-terminal domain of the alpha subunit of the RNAP.

It is found in the cytoplasm. Functionally, global transcriptional regulator that plays a key role in stress response and exerts either positive or negative regulation of genes. Acts by interacting with the C-terminal domain of the alpha subunit of the RNA polymerase (RNAP). This interaction can enhance binding of RNAP to the promoter region of target genes and stimulate their transcription, or block interaction of RNAP with activator. The sequence is that of Global transcriptional regulator Spx 1 from Bacillus anthracis.